We begin with the raw amino-acid sequence, 135 residues long: uncharacterized protein (135 aa).

4 consecutive transmembrane segments (helical) span residues 4-24, 26-46, 68-88, and 93-113; these read IIIC…WIFG, WDMP…TGVI, LILV…NGAW, and LIAY…CAAL.

The protein belongs to the bacteriophage holin family. Cp-1 holin subfamily.

The protein resides in the cell membrane. This is an uncharacterized protein from Clostridium perfringens (strain 13 / Type A).